The primary structure comprises 194 residues: Small ribosomal subunit protein eS7 (194 aa).

This sequence belongs to the eukaryotic ribosomal protein eS7 family.

This is Small ribosomal subunit protein eS7 (rps-7) from Caenorhabditis elegans.